The following is a 62-amino-acid chain: Small ribosomal subunit protein eS27 (62 aa).

4 residues coordinate Zn(2+): Cys17, Cys20, Cys36, and Cys39. The C4-type zinc finger occupies 17–39; the sequence is CPDCENEQTIFDRACTPVDCIVC.

The protein belongs to the eukaryotic ribosomal protein eS27 family. Part of the 30S ribosomal subunit. Zn(2+) is required as a cofactor.

The polypeptide is Small ribosomal subunit protein eS27 (Methanospirillum hungatei JF-1 (strain ATCC 27890 / DSM 864 / NBRC 100397 / JF-1)).